We begin with the raw amino-acid sequence, 235 residues long: Claudin-15 (235 aa).

Position 1 (Met-1) is a topological domain, cytoplasmic. A helical membrane pass occupies residues 2-24; it reads LVAVEIFGFFLTAVGLLMLGVTL. The Extracellular portion of the chain corresponds to 25–74; sequence AHSSWRVSTVHGNVITTNTIFENLWYSCATDSMGVHNCWEFPSMLALSGY. Residues Cys-52 and Cys-62 are joined by a disulfide bond. Residues 75 to 99 form a helical membrane-spanning segment; sequence IQACRALMITAILLGFLGLFLGMVG. Topologically, residues 100-115 are cytoplasmic; that stretch reads LRCTNIGGLELSRKTK. Ser-111 carries the phosphoserine modification. A helical transmembrane segment spans residues 116 to 140; the sequence is LAATAGALHILAGICGMVAVSWYAF. Residues 141 to 159 are Extracellular-facing; sequence NITRDFFNPLYAGTKYELG. The important for the formation of tight-junction strand-like structures stretch occupies residues 146–147; the sequence is FF. The helical transmembrane segment at 160-182 threads the bilayer; it reads PALYLGWSACLLAILGGICLFSN. The Cytoplasmic segment spans residues 183 to 235; that stretch reads CCCSRDRDPATGVQLPYKAPVIPAASLAARLPAAASDEEGDSSFGKYGKNAYV. Residues Ser-218 and Ser-225 each carry the phosphoserine modification.

This sequence belongs to the claudin family. As to quaternary structure, can form homo- and heteropolymeric tight junction strands. Palmitoylated.

Its subcellular location is the cell junction. The protein resides in the tight junction. It is found in the cell membrane. It carries out the reaction Na(+)(in) = Na(+)(out). The enzyme catalyses K(+)(in) = K(+)(out). The catalysed reaction is Cs(+)(in) = Cs(+)(out). It catalyses the reaction Rb(+)(in) = Rb(+)(out). It carries out the reaction Li(+)(in) = Li(+)(out). The enzyme catalyses NH4(+)(in) = NH4(+)(out). The catalysed reaction is methylamine(out) = methylamine(in). It catalyses the reaction H2O(in) = H2O(out). Forms paracellular channels: polymerizes in tight junction strands with cation- and water-selective channels through the strands, conveying epithelial permeability in a process known as paracellular tight junction permeability. In intestinal epithelium, allows for sodium and water fluxes from the peritoneal side to the lumen of the intestine to regulate nutrient absorption and intestinal morphogenesis. This is Claudin-15 (CLDN15) from Bos taurus (Bovine).